We begin with the raw amino-acid sequence, 321 residues long: tRNA pseudouridine synthase B (321 aa).

Catalysis depends on Asp-47, which acts as the Nucleophile.

This sequence belongs to the pseudouridine synthase TruB family. Type 1 subfamily.

It carries out the reaction uridine(55) in tRNA = pseudouridine(55) in tRNA. Responsible for synthesis of pseudouridine from uracil-55 in the psi GC loop of transfer RNAs. This Shewanella baltica (strain OS185) protein is tRNA pseudouridine synthase B.